Consider the following 423-residue polypeptide: Flavohemoprotein B (423 aa).

The 136-residue stretch at 1 to 136 folds into the Globin domain; sequence MLSQKSIQII…VAQAFMDAEE (136 aa). His83 is a binding site for heme b. Active-site charge relay system residues include Tyr93 and Glu135. Residues 149–423 are reductase; the sequence is WKDTREFVVD…LRGVKNIIEN (275 aa). Residues 150 to 268 enclose the FAD-binding FR-type domain; sequence KDTREFVVDR…SVPAGDFVVN (119 aa). Residues Tyr188 and 212-215 contribute to the FAD site; that span reads RHYS. Position 281–286 (281–286) interacts with NADP(+); it reads GVGINP. 400-403 is a binding site for FAD; sequence LFGP.

This sequence belongs to the globin family. Two-domain flavohemoproteins subfamily. It in the C-terminal section; belongs to the flavoprotein pyridine nucleotide cytochrome reductase family. FAD serves as cofactor. Requires heme b as cofactor.

It is found in the cytoplasm. It carries out the reaction 2 nitric oxide + NADPH + 2 O2 = 2 nitrate + NADP(+) + H(+). The catalysed reaction is 2 nitric oxide + NADH + 2 O2 = 2 nitrate + NAD(+) + H(+). Is involved in NO detoxification in an aerobic process, termed nitric oxide dioxygenase (NOD) reaction that utilizes O(2) and NAD(P)H to convert NO to nitrate, which protects the cell from various noxious nitrogen compounds. Therefore, plays a central role in the inducible response to nitrosative stress. In terms of biological role, in the presence of oxygen and NADH, it has NADH oxidase activity, which leads to the generation of superoxide and H(2)O(2). Under anaerobic conditions, it also exhibits nitric oxide reductase and FAD reductase activities. However, all these reactions are much lower than NOD activity. This Dictyostelium discoideum (Social amoeba) protein is Flavohemoprotein B (fhbB).